The primary structure comprises 239 residues: MGRKWNNIKDKKASKDANTSRIYAKFGREIYVAAKQGEPDPESNQALRVVLERAKTYNVPRTIIDRAVEKAKGGSEENYDELRYEGFGPNGAMVIVDTLTNNVNRTAADVRAAFSKNSGNMGVNGSVAYMFDATAVIGLEGKTSDEVLEILMEADVDARDILEEEDSVIVYAEPDQFHAVQSALKGAGVEEFTVAELTMLAQSDVTLPEDAQAQFEKMVDALEDLEDVQQVYHNVDLGE.

The protein belongs to the TACO1 family. YeeN subfamily.

The protein localises to the cytoplasm. The sequence is that of Probable transcriptional regulatory protein BC_0539 from Bacillus cereus (strain ATCC 14579 / DSM 31 / CCUG 7414 / JCM 2152 / NBRC 15305 / NCIMB 9373 / NCTC 2599 / NRRL B-3711).